The chain runs to 433 residues: O-methyltransferase hasC (433 aa).

S-adenosyl-L-methionine contacts are provided by residues E265 and 293-295 (GDF). The Proton acceptor role is filled by H313. Residues 413-433 (SPRANGNGNSAGGLEWESELM) are disordered.

Belongs to the class I-like SAM-binding methyltransferase superfamily. Cation-independent O-methyltransferase family. COMT subfamily.

The protein operates within secondary metabolite biosynthesis. O-methyltransferase; part of the gene cluster that mediates the biosynthesis of hexadehydro-astechrome (HAS), a tryptophan-derived iron(III)-complex that acts as a virulence factor in infected mice. Within the pathway, hasC, with the cytochrome P450 monooxygenase hasH and the FAD-linked oxidoreductase hasG, convert the hasE-prenylated Trp-Ala-dipeptide into an O-methylated diketopiperazine that is then released from the hasD NRPS. The HAS biosynthesis begins with the synthesis of a tethered Trp-Ala dipeptide by the NRPS hasD. The 7-dimethylallyltryptophan synthase hasE then catalyzes the prenylation of the hasD-tethered tryptophan or the resulting tethered Trp-Ala dipeptide at the C-7 position of the indole moiety. HAS biosynthesis continues via tethered intermediates with the succesive actions of the cytochrome P450 monooxygenase hasH, the O-methyltransferase hasC, and the FAD-linked oxidoreductase hasG. The resulting O-methylated diketopiperazine is then released from hasD. Finally, three O-methylated diketopiperazine molecules assemble in a trimeric complex with Fe(III) to produce hexadehydro-astechrome. The sequence is that of O-methyltransferase hasC from Aspergillus fumigatus (strain CBS 144.89 / FGSC A1163 / CEA10) (Neosartorya fumigata).